A 608-amino-acid polypeptide reads, in one-letter code: Albumin 1 (608 aa).

The first 14 residues, 1–14 (MQWLSVCSLLVLLS), serve as a signal peptide directing secretion. A propeptide spanning residues 15-18 (VLSR) is cleaved from the precursor. Albumin domains follow at residues 19–205 (SQAQ…TFQH), 206–398 (AVMK…AGSD), and 402–600 (KITD…KLVS). 18 disulfides stabilise this stretch: Cys-26–Cys-72, Cys-71–Cys-80, Cys-93–Cys-108, Cys-107–Cys-118, Cys-142–Cys-187, Cys-186–Cys-195, Cys-218–Cys-264, Cys-263–Cys-271, Cys-283–Cys-299, Cys-298–Cys-309, Cys-336–Cys-381, Cys-380–Cys-389, Cys-414–Cys-460, Cys-459–Cys-471, Cys-484–Cys-500, Cys-499–Cys-510, Cys-537–Cys-582, and Cys-581–Cys-590. Residue Asn-501 is glycosylated (N-linked (GlcNAc...) asparagine).

Belongs to the ALB/AFP/VDB family. In terms of tissue distribution, plasma.

The protein resides in the secreted. In terms of biological role, binds water, Ca(2+), Na(+), K(+), fatty acids, hormones, bilirubin and drugs. Its main function is the regulation of the colloidal osmotic pressure of blood. This is Albumin 1 (alb1) from Salmo salar (Atlantic salmon).